Reading from the N-terminus, the 271-residue chain is Shikimate dehydrogenase (NADP(+)) (271 aa).

Residues 14 to 16 (SLS) and Thr61 each bind shikimate. Catalysis depends on Lys65, which acts as the Proton acceptor. 2 residues coordinate shikimate: Asn86 and Asp101. NADP(+) is bound by residues 125 to 129 (GAGGA) and Ile212. Tyr214 contacts shikimate. Gly235 serves as a coordination point for NADP(+).

The protein belongs to the shikimate dehydrogenase family. Homodimer.

It carries out the reaction shikimate + NADP(+) = 3-dehydroshikimate + NADPH + H(+). It functions in the pathway metabolic intermediate biosynthesis; chorismate biosynthesis; chorismate from D-erythrose 4-phosphate and phosphoenolpyruvate: step 4/7. Its function is as follows. Involved in the biosynthesis of the chorismate, which leads to the biosynthesis of aromatic amino acids. Catalyzes the reversible NADPH linked reduction of 3-dehydroshikimate (DHSA) to yield shikimate (SA). In Clostridium perfringens (strain ATCC 13124 / DSM 756 / JCM 1290 / NCIMB 6125 / NCTC 8237 / Type A), this protein is Shikimate dehydrogenase (NADP(+)).